Here is a 273-residue protein sequence, read N- to C-terminus: Putative phosphoenolpyruvate synthase regulatory protein (273 aa).

ADP is bound at residue 153–160; that stretch reads GVSRSGKT.

The protein belongs to the pyruvate, phosphate/water dikinase regulatory protein family. PSRP subfamily.

The catalysed reaction is [pyruvate, water dikinase] + ADP = [pyruvate, water dikinase]-phosphate + AMP + H(+). The enzyme catalyses [pyruvate, water dikinase]-phosphate + phosphate + H(+) = [pyruvate, water dikinase] + diphosphate. In terms of biological role, bifunctional serine/threonine kinase and phosphorylase involved in the regulation of the phosphoenolpyruvate synthase (PEPS) by catalyzing its phosphorylation/dephosphorylation. In Polaromonas naphthalenivorans (strain CJ2), this protein is Putative phosphoenolpyruvate synthase regulatory protein.